Consider the following 398-residue polypeptide: Mannitol-1-phosphate 5-dehydrogenase (398 aa).

Residue 10 to 21 coordinates NAD(+); it reads AVHFGAGNIGRG. Lys221 is a catalytic residue.

Belongs to the mannitol dehydrogenase family. In terms of assembly, monomer.

The enzyme catalyses D-mannitol 1-phosphate + NAD(+) = beta-D-fructose 6-phosphate + NADH + H(+). Its function is as follows. Catalyzes the NAD(H)-dependent interconversion of D-fructose 6-phosphate and D-mannitol 1-phosphate in the mannitol metabolic pathway. The polypeptide is Mannitol-1-phosphate 5-dehydrogenase (Neurospora crassa (strain ATCC 24698 / 74-OR23-1A / CBS 708.71 / DSM 1257 / FGSC 987)).